The primary structure comprises 24 residues: SEDETRLVKNLFSGYNKVVRPVNH.

The protein belongs to the ligand-gated ion channel (TC 1.A.9) family. Acetylcholine receptor (TC 1.A.9.1) subfamily. Alpha-1/CHRNA1 sub-subfamily. One of the alpha chains that assemble within the acetylcholine receptor, a pentamer of two alpha chains, a beta, a delta, and a gamma or epsilon chains.

It localises to the postsynaptic cell membrane. Its subcellular location is the cell membrane. It carries out the reaction K(+)(in) = K(+)(out). It catalyses the reaction Na(+)(in) = Na(+)(out). Upon acetylcholine binding, the AChR responds by an extensive change in conformation that affects all subunits and leads to opening of an ion-conducting channel across the plasma membrane. In Electrophorus electricus (Electric eel), this protein is Acetylcholine receptor subunit alpha (chrna1).